We begin with the raw amino-acid sequence, 847 residues long: Glucans biosynthesis glucosyltransferase H (847 aa).

Topologically, residues 1–138 (MNKTTEYIDA…KWRTVGTIRR (138 aa)) are cytoplasmic. Residues 139–156 (YILLILTLAQTVVATWYM) form a helical membrane-spanning segment. The Periplasmic portion of the chain corresponds to 157 to 193 (KTILPYQGWALINPMDMVGQDIWVSFMQLLPYMLQTG). Residues 194 to 216 (ILILFAVLFCWVSAGFWTALMGF) traverse the membrane as a helical segment. At 217–511 (LQLLIGRDKY…LVKGMHPVHR (295 aa)) the chain is on the cytoplasmic side. A helical transmembrane segment spans residues 512–534 (AVFLTGVMSYLSAPLWFMFLALS). Topologically, residues 535–567 (TALQVVHALTEPQYFLQPRQLFPVWPQWRPELA) are periplasmic. Residues 568 to 590 (IALFASTMVLLFLPKLLSIMLIW) traverse the membrane as a helical segment. Over 591-602 (CKGTKEYGGFWR) the chain is Cytoplasmic. The chain crosses the membrane as a helical span at residues 603–625 (VTLSLLLEVLFSVLLAPVRMLFH). At 626 to 679 (TVFVVSAFLGWEVVWNSPQRDDDSTPWGEAFMRHGSQLLLGLVWAVGMAWLDLR) the chain is on the periplasmic side. The helical transmembrane segment at 680-702 (FLFWLAPIVFSLILSPFVSVISS) threads the bilayer. Residues 703-847 (RSTVGLRTKR…ALQGRTSSAR (145 aa)) are Cytoplasmic-facing.

It belongs to the glycosyltransferase 2 family. OpgH subfamily.

It localises to the cell inner membrane. Its pathway is glycan metabolism; osmoregulated periplasmic glucan (OPG) biosynthesis. In terms of biological role, involved in the biosynthesis of osmoregulated periplasmic glucans (OPGs). The chain is Glucans biosynthesis glucosyltransferase H from Salmonella typhimurium (strain LT2 / SGSC1412 / ATCC 700720).